Reading from the N-terminus, the 533-residue chain is Probable RNA-binding protein 46 (533 aa).

RRM domains lie at 61 to 139 (CEVF…VSLD), 141 to 223 (CRLF…WADP), and 236 to 308 (KVLY…LAKP).

Interacts with YTHDC2, MEIOC, MOV10, CNOT6L, DDX4, UPF1 and PABPC1.

It is found in the cytoplasm. Its function is as follows. Essential for male and female fertility, playing a crucial role in regulating germ cell development by ensuring the proper progression of meiosis prophase I. Regulates mitotic-to-meiotic transition in spermatogenesis by forming a complex with MEIOC and YTHDC2 which recognizes and down-regulates mitotic transcripts for a successful meiotic entry. Required for normal synaptonemal complex formation during meiosis, binding meiotic cohesin subunit mRNAs containing GCCUAU/GUUCGA motifs in their 3'UTRs regions and positively regulating their translation. Required for spermatogonial differentiation in both developing and adult testis. The sequence is that of Probable RNA-binding protein 46 (RBM46) from Homo sapiens (Human).